The chain runs to 567 residues: uncharacterized protein (567 aa).

The Lumenal portion of the chain corresponds to 1-31; that stretch reads MLDTILINVFRRDGDDDDDDGQDPALQELYS. Residues 32 to 52 form a helical membrane-spanning segment; the sequence is SWALFILLVLLIGALLTSYYV. The Cytoplasmic portion of the chain corresponds to 53–64; it reads QSKKIRAIHETV. A helical membrane pass occupies residues 65-85; that stretch reads ISVFVGMVVGLIIRVSPGLII. The Lumenal portion of the chain corresponds to 86-87; it reads QN. The chain crosses the membrane as a helical span at residues 88–108; that stretch reads MVSFHSTYFFNVLLPPIILNS. Topologically, residues 109-128 are cytoplasmic; it reads GYELHQSNFFRNIGTILTFA. The helical transmembrane segment at 129 to 149 threads the bilayer; it reads FAGTFISAVTLGVLVYIFSFL. Residues 150-159 lie on the Lumenal side of the membrane; sequence NFENLSMTFV. The chain crosses the membrane as a helical span at residues 160 to 180; that stretch reads EALSMGATLSATDPVTVLAIF. Residues 181–188 are Cytoplasmic-facing; the sequence is NSYKVDQK. The helical transmembrane segment at 189-209 threads the bilayer; sequence LYTIIFGESILNDAVAIVMFE. The Lumenal segment spans residues 210–227; the sequence is TLQQFQGKTLHFFTLFSG. Residues 228-248 form a helical membrane-spanning segment; it reads IGIFIITFFISLLIGVSIGLI. Residues 249 to 277 lie on the Cytoplasmic side of the membrane; sequence TALLLKYSYLRRYPSIESCIILLMAYTSY. The helical transmembrane segment at 278 to 298 threads the bilayer; it reads FFSNGCHMSGVVSLLFCGITL. The Lumenal segment spans residues 299–315; it reads KHYAFFNMSYKAKLSTK. The chain crosses the membrane as a helical span at residues 316–338; it reads YVFRVLAQLSENFIFIYLGMSLF. Over 339-347 the chain is Cytoplasmic; that stretch reads TQVDLVYKP. A helical membrane pass occupies residues 348–366; that stretch reads IFILITTVAVTASRYMNVF. The Lumenal portion of the chain corresponds to 367–392; that stretch reads PLSNLLNKFHRQRNGNLIDHIPYSYQ. A helical transmembrane segment spans residues 393 to 413; that stretch reads MMLFWAGLRGAVGVALAAGFE. Residues 414 to 424 lie on the Cytoplasmic side of the membrane; it reads GENAQTLRATT. Residues 425–445 traverse the membrane as a helical segment; it reads LVVVVLTLIIFGGTTARMLEI. The Lumenal segment spans residues 446–567; the sequence is LHIETGVAAD…RDNLKNGTKK (122 aa). Residue Ser515 is modified to Phosphoserine.

This sequence belongs to the monovalent cation:proton antiporter 1 (CPA1) transporter (TC 2.A.36) family.

It localises to the golgi apparatus membrane. This is an uncharacterized protein from Schizosaccharomyces pombe (strain 972 / ATCC 24843) (Fission yeast).